The following is a 561-amino-acid chain: DNA ligase (561 aa).

Residue glutamate 253 coordinates ATP. Lysine 255 acts as the N6-AMP-lysine intermediate in catalysis. Residues arginine 260, arginine 275, glutamate 304, phenylalanine 344, arginine 421, and lysine 427 each coordinate ATP.

Belongs to the ATP-dependent DNA ligase family. The cofactor is Mg(2+).

It catalyses the reaction ATP + (deoxyribonucleotide)n-3'-hydroxyl + 5'-phospho-(deoxyribonucleotide)m = (deoxyribonucleotide)n+m + AMP + diphosphate.. In terms of biological role, DNA ligase that seals nicks in double-stranded DNA during DNA replication, DNA recombination and DNA repair. This chain is DNA ligase, found in Halobacterium salinarum (strain ATCC 29341 / DSM 671 / R1).